The following is a 202-amino-acid chain: Venom allergen 5.02 (202 aa).

4 cysteine pairs are disulfide-bonded: Cys-4-Cys-16, Cys-8-Cys-101, Cys-26-Cys-94, and Cys-168-Cys-185. Residues 46–187 (KQHNEFRQKV…WHRHYLVCNY (142 aa)) enclose the SCP domain.

This sequence belongs to the CRISP family. Venom allergen 5-like subfamily. In terms of tissue distribution, expressed by the venom gland.

The protein localises to the secreted. This is Venom allergen 5.02 from Vespa crabro (European hornet).